The chain runs to 648 residues: SRSF protein kinase 1 (648 aa).

The segment at 1–57 is disordered; the sequence is MERKVLALQARKKRTKAKKDKAQRKPETQHRGSAPHSESDIPEQEEEILGSDDDEQE. Over residues 10 to 22 the composition is skewed to basic residues; that stretch reads ARKKRTKAKKDKA. Residues 40–57 show a composition bias toward acidic residues; that stretch reads DIPEQEEEILGSDDDEQE. S51 carries the phosphoserine modification. Residues 80-646 form the Protein kinase domain; it reads YHVIRKLGWG…AAECLRHPWL (567 aa). ATP-binding positions include 86 to 94 and K109; that span reads LGWGHFSTV. D213 (proton acceptor) is an active-site residue. Disordered regions lie at residues 238-354 and 395-464; these read WQRS…APEI and PSFL…DSKG. Residues 265 to 276 are compositionally biased toward basic residues; it reads KNKKKKLKKKQK. 2 stretches are compositionally biased toward basic and acidic residues: residues 277–288 and 304–317; these read RQAELLEKRMQE and NKQE…DRPL. Residues S309, S311, and S333 each carry the phosphoserine modification. Composition is skewed to polar residues over residues 333–343 and 396–441; these read SNSIGQDQTLT and SFLN…TQLE. T448 carries the post-translational modification Phosphothreonine. S450 is modified (phosphoserine). Phosphoserine; by CK2 is present on S548.

The protein belongs to the protein kinase superfamily. CMGC Ser/Thr protein kinase family. Monomer. Found in a multisubunit complex containing seven proteins, named toposome, which separates entangled circular chromatin DNA during chromosome segregation. Interacts with HHV-1 ICP27 protein. Interacts with DNAJC8 and AHSA1/AHA1 and this mediates formation of a complex with the Hsp70 /Hsp90 machinery. Binds to IGF2BP1, SYNCRIP, HNRNPA2B1 and HNRNPC. Interacts with SAFB/SAFB1 and SAFB2 which inhibits its activity. It depends on Mg(2+) as a cofactor. As to expression, predominantly expressed in the testis but is also present at lower levels in heart, spleen, liver, brain, kidney, lung and skeletal muscle. Present in all germinal cells in the seminiferous tubules but not in mature spermatozoa.

It localises to the cytoplasm. Its subcellular location is the nucleus. The protein localises to the nucleoplasm. The protein resides in the nucleus matrix. It is found in the microsome. It localises to the nucleus speckle. Its subcellular location is the chromosome. It carries out the reaction L-seryl-[protein] + ATP = O-phospho-L-seryl-[protein] + ADP + H(+). The enzyme catalyses L-threonyl-[protein] + ATP = O-phospho-L-threonyl-[protein] + ADP + H(+). Activated by phosphorylation on Ser-51 and Ser-548. In terms of biological role, serine/arginine-rich protein-specific kinase which specifically phosphorylates its substrates at serine residues located in regions rich in arginine/serine dipeptides, known as RS domains and is involved in the phosphorylation of SR splicing factors and the regulation of splicing. Plays a central role in the regulatory network for splicing, controlling the intranuclear distribution of splicing factors in interphase cells and the reorganization of nuclear speckles during mitosis. Can influence additional steps of mRNA maturation, as well as other cellular activities, such as chromatin reorganization in somatic and sperm cells and cell cycle progression. Phosphorylates SFRS2, ZRSR2, LBR and PRM1. Phosphorylates SRSF1 using a directional (C-terminal to N-terminal) and a dual-track mechanism incorporating both processive phosphorylation (in which the kinase stays attached to the substrate after each round of phosphorylation) and distributive phosphorylation steps (in which the kinase and substrate dissociate after each phosphorylation event). The RS domain of SRSF1 binds first to a docking groove in the large lobe of the kinase domain of SRPK1. This induces certain structural changes in SRPK1 and/or RRM2 domain of SRSF1, allowing RRM2 to bind the kinase and initiate phosphorylation. The cycles continue for several phosphorylation steps in a processive manner (steps 1-8) until the last few phosphorylation steps (approximately steps 9-12). During that time, a mechanical stress induces the unfolding of the beta-4 motif in RRM2, which then docks at the docking groove of SRPK1. This also signals RRM2 to begin to dissociate, which facilitates SRSF1 dissociation after phosphorylation is completed. Can mediate hepatitis B virus (HBV) core protein phosphorylation. It plays a negative role in the regulation of HBV replication through a mechanism not involving the phosphorylation of the core protein but by reducing the packaging efficiency of the pregenomic RNA (pgRNA) without affecting the formation of the viral core particles. Can induce splicing of exon 10 in MAPT/TAU. This is SRSF protein kinase 1 from Mus musculus (Mouse).